A 2336-amino-acid polypeptide reads, in one-letter code: Voltage-dependent N-type calcium channel subunit alpha-1B (2336 aa).

The disordered stretch occupies residues 1-37 (MVRFGDELGGRYGGTGGGERARGGGAGGAGGPGQGGL). The Cytoplasmic portion of the chain corresponds to 1-90 (MVRFGDELGG…DNVVRKYAKR (90 aa)). Over residues 10 to 37 (GRYGGTGGGERARGGGAGGAGGPGQGGL) the composition is skewed to gly residues. An Omega-N-methylarginine modification is found at R22. The I repeat unit spans residues 82-359 (NVVRKYAKRI…LVLGVLSGEF (278 aa)). The helical transmembrane segment at 91-114 (ITEWPPFEYMILATIIANCIVLAL) threads the bilayer. The Extracellular segment spans residues 115–131 (EQHLPDGDKTPMSERLD). A helical membrane pass occupies residues 132–152 (DTEPYFIGIFCFEAGIKIIAL). Residues 153-163 (GFVFHKGSYLR) lie on the Cytoplasmic side of the membrane. Residues 164 to 182 (NGWNVMDFVVVLTEILATA) form a helical membrane-spanning segment. Over 183 to 187 (GTDFD) the chain is Extracellular. The helical transmembrane segment at 188-211 (LRTLRAVRVLRPLKLVSGIPSLQV) threads the bilayer. Residues 212–221 (VLKSIMKAMV) are Cytoplasmic-facing. The chain crosses the membrane as a helical span at residues 222–244 (PLLQIGLLLFFAILMFAIIGLEF). The Extracellular portion of the chain corresponds to 245–331 (YMGKFHKACF…NTNDAAGNTW (87 aa)). N-linked (GlcNAc...) asparagine glycosylation occurs at N256. The helical transmembrane segment at 332 to 356 (NWLYFIPLIIIGSFFMLNLVLGVLS) threads the bilayer. Residues 357 to 483 (GEFAKERERV…FLIRRMVKAQ (127 aa)) lie on the Cytoplasmic side of the membrane. Residues 379–396 (QQIERELNGYLEWIFKAE) form a binding to the beta subunit region. S411 bears the Phosphoserine mark. An ATP-binding site is contributed by 452 to 459 (ASLKSGKT). The stretch at 469–713 (EKMFRFLIRR…VFLAIAVDNL (245 aa)) is one II repeat. The helical transmembrane segment at 484–502 (SFYWVVLCVVALNTLCVAM) threads the bilayer. Over 503–512 (VHYNQPQRLT) the chain is Extracellular. A helical membrane pass occupies residues 513–535 (TALYFAEFVFLGLFLTEMSLKMY). Residues 536 to 545 (GLGPRSYFRS) are Cytoplasmic-facing. An a 1,2-diacyl-sn-glycero-3-phospho-(1D-myo-inositol-4,5-bisphosphate)-binding site is contributed by S545. A helical membrane pass occupies residues 546–567 (SFNCFDFGVIVGSIFEVVWAAI). The Extracellular portion of the chain corresponds to 568 to 574 (KPGTSFG). Residues 575-587 (ISVLRALRLLRIF) traverse the membrane as a helical segment. A 1,2-diacyl-sn-glycero-3-phospho-(1D-myo-inositol-4,5-bisphosphate)-binding residues include R585 and K588. The Cytoplasmic segment spans residues 588-605 (KVTKYWNSLRNLVVSLLN). Residues 606–631 (SMKSIISLLFLLFLFIVVFALLGMQL) form a helical membrane-spanning segment. Residues 632-683 (FGGQFNFQDETPTTNFDTFPAAILTVFQILTGEDWNAVMYHGIESQGGVSKG) are Extracellular-facing. A helical membrane pass occupies residues 684–710 (MFSSFYFIVLTLFGNYTLLNVFLAIAV). Residues 711–1149 (DNLANAQELT…FCHYIVTMRY (439 aa)) are Cytoplasmic-facing. A phosphoserine mark is found at S746, S749, and S784. 2 disordered regions span residues 800-1021 (YAST…HQPK) and 1051-1076 (EQPE…STTV). 6 stretches are compositionally biased toward basic and acidic residues: residues 806–827 (VRPD…RDGL), 870–891 (EQDR…EERA), 920–930 (GSPEEATEREP), 938–948 (HAQDSSKEGKE), 970–981 (GPRETENSEEPT), and 996–1021 (PPER…HQPK). Over residues 1059 to 1076 (QRNVTRMGSQPSDPSTTV) the composition is skewed to polar residues. A Phosphoserine modification is found at S1067. The III repeat unit spans residues 1135 to 1421 (NLLRRFCHYI…IFVALIIITF (287 aa)). Residues 1150–1168 (FEMVILVVIALSSIALAAE) form a helical membrane-spanning segment. Topologically, residues 1169-1176 (DPVRTDSF) are extracellular. A helical membrane pass occupies residues 1177–1201 (RNNALKYMDYIFTGVFTFEMVIKMI). Topologically, residues 1202–1215 (DLGLLLHPGAYFRD) are cytoplasmic. Residues 1216-1240 (LWNILDFIVVSGALVAFAFSSFMGG) traverse the membrane as a helical segment. The Extracellular portion of the chain corresponds to 1241–1246 (SKGKDI). A helical transmembrane segment spans residues 1247-1267 (NTIKSLRVLRVLRPLKTIKRL). Residues 1268–1285 (PKLKAVFDCVVNSLKNVL) are Cytoplasmic-facing. A helical membrane pass occupies residues 1286–1305 (NILIVYMLFMFIFAVIAVQL). Residues 1306–1392 (FKGKFFYCTD…EQGPSPGFRM (87 aa)) are Extracellular-facing. A helical membrane pass occupies residues 1393–1418 (ELSIFYVVYFVVFPFFFVNIFVALII). The Cytoplasmic segment spans residues 1419–1473 (ITFQEQGDKVMSECSLEKNERACIDFAISAKPLTRYMPQNKQSFQYKTWTFVVSP). An IV repeat occupies 1458–1711 (NKQSFQYKTW…LFVAVIMDNF (254 aa)). A helical transmembrane segment spans residues 1474–1492 (PFEYFIMAMIALNTVVLMM). At 1493–1500 (KFYDAPYE) the chain is on the extracellular side. The helical transmembrane segment at 1501–1525 (YELMLKCLNIVFTSMFSLECILKII) threads the bilayer. Residues 1526–1535 (AFGVLNYFRD) lie on the Cytoplasmic side of the membrane. Residues 1536–1557 (AWNVFDFVTVLGSITDILVTEI) traverse the membrane as a helical segment. The Extracellular portion of the chain corresponds to 1558–1563 (ANNFIN). N1563 is a glycosylation site (N-linked (GlcNAc...) asparagine). Residues 1564 to 1582 (LSFLRLFRAARLIKLCRQG) traverse the membrane as a helical segment. Residues 1583 to 1601 (YTIRILLWTFVQSFKALPY) are Cytoplasmic-facing. Residues 1602–1621 (VCLLIAMLFFIYAIIGMQVF) form a helical membrane-spanning segment. At 1622-1683 (GNIALDDGTS…ANASECGSDF (62 aa)) the chain is on the extracellular side. N1675 is a glycosylation site (N-linked (GlcNAc...) asparagine). A helical transmembrane segment spans residues 1684-1707 (AYFYFVSFIFLCSFLMLNLFVAVI). The Cytoplasmic segment spans residues 1708–2336 (MDNFEYLTRD…YHHPDQDHWC (629 aa)). The EF-hand domain maps to 1724–1759 (HHLDEFIRVWAEYDPAACGRISYNDMFEMLKHMSPP). Ca(2+)-binding residues include D1737, R1743, and D1748. Residues 1981 to 2202 (TLRGPDGEPQ…TPRPSITYKT (222 aa)) are disordered. Residues 2048–2062 (SHHHHHRCHRRRDKK) show a composition bias toward basic residues. Phosphoserine is present on S2065. Basic and acidic residues predominate over residues 2097-2113 (CRRERKQERGRSQERRQ). The span at 2161–2177 (GSGSVNGSPLMSTSGAS) shows a compositional bias: polar residues. Residues S2221, S2230, and S2253 each carry the phosphoserine modification.

The protein belongs to the calcium channel alpha-1 subunit (TC 1.A.1.11) family. CACNA1B subfamily. In terms of assembly, multisubunit complex consisting of alpha-1, alpha-2, beta and delta subunits in a 1:1:1:1 ratio. The channel activity is directed by the pore-forming and voltage-sensitive alpha-1 subunit. In many cases, this subunit is sufficient to generate voltage-sensitive calcium channel activity. The auxiliary subunits beta and alpha-2/delta linked by a disulfide bridge regulate the channel activity. Interacts with RIMS1. Interacts with FMR1 (via C-terminus); this interaction induces a decrease in the number of presynaptic functional CACNA1B channels at the cell surface. Phosphorylated in vitro by CaM-kinase II, PKA, PKC and CGPK. Central nervous system.

It is found in the membrane. It carries out the reaction Ca(2+)(in) = Ca(2+)(out). Its activity is regulated as follows. Is specifically blocked by omega-conotoxin GVIA. Is specifically blocked by omega-conotoxin MVIIA (ziconotide). Is insensitive to dihydropyridines (DHP). In terms of biological role, voltage-sensitive calcium channels (VSCC) mediate the entry of calcium ions into excitable cells and are also involved in a variety of calcium-dependent processes, including muscle contraction, hormone or neurotransmitter release, gene expression, cell motility, cell division and cell death. This alpha-1B subunit gives rise to N-type calcium currents. N-type calcium channels belong to the 'high-voltage activated' (HVA) group. They are involved in pain signaling. Calcium channels containing alpha-1B subunit may play a role in directed migration of immature neurons. Mediates Ca(2+) release probability at hippocampal neuronal soma and synaptic terminals. This Rattus norvegicus (Rat) protein is Voltage-dependent N-type calcium channel subunit alpha-1B (Cacna1b).